Here is a 198-residue protein sequence, read N- to C-terminus: MAKVLVIKTSMMGANSISNVLNDKFMEYYKEKNPNDEFIYMNLNDEKMASITMTSHNMKEYFVAEYSDKYINQLKKVDKVVMSVPMTNFNVNAVTKNYLDHISVADKTFSYKYSKKGEAIGLLDHLSVQILTTQGAPLGWYPWGNHSEYLKGHWRFLGAKVADHILVDSVKIGENSKKTPQEIIEKFDGEIKKAAYSF.

Residues Ser-10 and Ser-16–Ser-18 contribute to the FMN site.

This sequence belongs to the azoreductase type 1 family. In terms of assembly, homodimer. FMN is required as a cofactor.

It catalyses the reaction 2 a quinone + NADH + H(+) = 2 a 1,4-benzosemiquinone + NAD(+). The enzyme catalyses N,N-dimethyl-1,4-phenylenediamine + anthranilate + 2 NAD(+) = 2-(4-dimethylaminophenyl)diazenylbenzoate + 2 NADH + 2 H(+). In terms of biological role, quinone reductase that provides resistance to thiol-specific stress caused by electrophilic quinones. Its function is as follows. Also exhibits azoreductase activity. Catalyzes the reductive cleavage of the azo bond in aromatic azo compounds to the corresponding amines. The sequence is that of FMN-dependent NADH:quinone oxidoreductase from Mycoplasmopsis pulmonis (strain UAB CTIP) (Mycoplasma pulmonis).